The primary structure comprises 144 residues: Neuritin-A (144 aa).

The signal sequence occupies residues Met-1 to Ala-27. A lipid anchor (GPI-anchor amidated serine) is attached at Ser-114. Residues Ala-115 to Gln-144 constitute a propeptide, removed in mature form.

Belongs to the neuritin family. Expressed in sensory regions of the brain including the visual, auditory and olfactory systems. Within the retina, only expressed in the retinal ganglion cells. Concentrated in axon tracts including retinal axons.

The protein resides in the cell membrane. Functionally, modulates postsynaptic dendritic arbor elaboration and synaptic maturation. The polypeptide is Neuritin-A (nrn1-a) (Xenopus laevis (African clawed frog)).